A 484-amino-acid polypeptide reads, in one-letter code: uncharacterized protein (484 aa).

An FAD-binding PCMH-type domain is found at 47 to 226 (TLPIPAAVVK…TEVTVKIFKF (180 aa)).

It belongs to the FAD-binding oxidoreductase/transferase type 4 family.

This is an uncharacterized protein from Escherichia coli O157:H7.